A 250-amino-acid chain; its full sequence is 3-deoxy-manno-octulosonate cytidylyltransferase (250 aa).

This sequence belongs to the KdsB family.

It localises to the cytoplasm. It carries out the reaction 3-deoxy-alpha-D-manno-oct-2-ulosonate + CTP = CMP-3-deoxy-beta-D-manno-octulosonate + diphosphate. Its pathway is nucleotide-sugar biosynthesis; CMP-3-deoxy-D-manno-octulosonate biosynthesis; CMP-3-deoxy-D-manno-octulosonate from 3-deoxy-D-manno-octulosonate and CTP: step 1/1. It participates in bacterial outer membrane biogenesis; lipopolysaccharide biosynthesis. Its function is as follows. Activates KDO (a required 8-carbon sugar) for incorporation into bacterial lipopolysaccharide in Gram-negative bacteria. The polypeptide is 3-deoxy-manno-octulosonate cytidylyltransferase (Francisella philomiragia subsp. philomiragia (strain ATCC 25017 / CCUG 19701 / FSC 153 / O#319-036)).